Consider the following 269-residue polypeptide: UPF0162 protein YchA (269 aa).

This sequence belongs to the UPF0162 family.

This Escherichia coli O157:H7 protein is UPF0162 protein YchA (ychA).